A 266-amino-acid chain; its full sequence is Hemin import ATP-binding protein HmuV (266 aa).

The 241-residue stretch at isoleucine 2–serine 242 folds into the ABC transporter domain. ATP is bound at residue glycine 34–serine 41.

This sequence belongs to the ABC transporter superfamily. Heme (hemin) importer (TC 3.A.1.14.5) family. As to quaternary structure, the complex is composed of two ATP-binding proteins (HmuV), two transmembrane proteins (HmuU) and a solute-binding protein (HmuT).

It localises to the cell inner membrane. Functionally, part of the ABC transporter complex HmuTUV involved in hemin import. Responsible for energy coupling to the transport system. The sequence is that of Hemin import ATP-binding protein HmuV from Bartonella henselae (strain ATCC 49882 / DSM 28221 / CCUG 30454 / Houston 1) (Rochalimaea henselae).